Consider the following 196-residue polypeptide: Small ribosomal subunit protein uS5 (196 aa).

Residues 17–80 form the S5 DRBM domain; that stretch reads FEEKMLFVNR…AVARKNMITV (64 aa). The tract at residues 164-196 is disordered; sequence GTEVRPSLSSDSPAGRSATTEAGEGVADTGGMQ. The segment covering 170–183 has biased composition (polar residues); it reads SLSSDSPAGRSATT.

Belongs to the universal ribosomal protein uS5 family. As to quaternary structure, part of the 30S ribosomal subunit. Contacts proteins S4 and S8.

Functionally, with S4 and S12 plays an important role in translational accuracy. In terms of biological role, located at the back of the 30S subunit body where it stabilizes the conformation of the head with respect to the body. The chain is Small ribosomal subunit protein uS5 from Deinococcus radiodurans (strain ATCC 13939 / DSM 20539 / JCM 16871 / CCUG 27074 / LMG 4051 / NBRC 15346 / NCIMB 9279 / VKM B-1422 / R1).